Reading from the N-terminus, the 232-residue chain is Anti-sigma-K factor RskA (232 aa).

The Cytoplasmic portion of the chain corresponds to 1–91 (MTEPTDFQLL…QSRRQPRWRT (91 aa)). The helical transmembrane segment at 92-112 (AVFASAAAIAVGLGAFGLGVL) threads the bilayer. Over 113–232 (TRPSASPTVA…GTVLAELPLR (120 aa)) the chain is Extracellular.

This sequence belongs to the anti-sigma-K factor family.

It is found in the cell membrane. Functionally, an anti-sigma factor for extracytoplasmic function (ECF) sigma factor SigK. ECF sigma factors are held in an inactive form by an anti-sigma factor until released by regulated intramembrane proteolysis (RIP). RIP occurs when an extracytoplasmic signal triggers a concerted proteolytic cascade to transmit information and elicit cellular responses. The membrane-spanning regulatory substrate protein is first cut extracytoplasmically (site-1 protease, S1P), then within the membrane itself (site-2 protease, S2P, Rip1), while cytoplasmic proteases finish degrading the regulatory protein, liberating the sigma factor. The polypeptide is Anti-sigma-K factor RskA (rskA) (Mycobacterium ulcerans (strain Agy99)).